The sequence spans 429 residues: 26S proteasome regulatory subunit 6A homolog (429 aa).

Residues 1-21 (MSSPPPAAAAAMAVDDADDDQ) form a disordered region. 217 to 224 (GPPGTGKT) provides a ligand contact to ATP.

It belongs to the AAA ATPase family.

It is found in the cytoplasm. Its subcellular location is the nucleus. In terms of biological role, the 26S proteasome is involved in the ATP-dependent degradation of ubiquitinated proteins. The regulatory (or ATPase) complex confers ATP dependency and substrate specificity to the 26S complex. The chain is 26S proteasome regulatory subunit 6A homolog (TBP1) from Oryza sativa subsp. japonica (Rice).